The chain runs to 701 residues: T-cell immunomodulatory protein homolog (701 aa).

The first 29 residues, 1–29, serve as a signal peptide directing secretion; it reads MVKCGKYVLILELLLLTLLYNLIKRVSNS. Topologically, residues 30–657 are extracellular; the sequence is GETVSSFVDG…IQLSVNPSNK (628 aa). Residues N148, N180, N217, N258, N458, N522, and N571 are each glycosylated (N-linked (GlcNAc...) asparagine). The helical transmembrane segment at 658-678 threads the bilayer; it reads FYSIIYITLICLSVIGVLIFI. Topologically, residues 679–701 are cytoplasmic; it reads LDRKEKIEDSKEEMGFKSHFVIG.

This sequence belongs to the TIP family.

It localises to the membrane. In terms of biological role, may protect the parasite against attack by the host immune system by immunomodulation. This Plasmodium yoelii yoelii protein is T-cell immunomodulatory protein homolog.